The sequence spans 342 residues: S-adenosylmethionine:tRNA ribosyltransferase-isomerase (342 aa).

The protein belongs to the QueA family. Monomer.

The protein localises to the cytoplasm. The catalysed reaction is 7-aminomethyl-7-carbaguanosine(34) in tRNA + S-adenosyl-L-methionine = epoxyqueuosine(34) in tRNA + adenine + L-methionine + 2 H(+). The protein operates within tRNA modification; tRNA-queuosine biosynthesis. Transfers and isomerizes the ribose moiety from AdoMet to the 7-aminomethyl group of 7-deazaguanine (preQ1-tRNA) to give epoxyqueuosine (oQ-tRNA). The chain is S-adenosylmethionine:tRNA ribosyltransferase-isomerase from Zymomonas mobilis subsp. mobilis (strain ATCC 31821 / ZM4 / CP4).